We begin with the raw amino-acid sequence, 1405 residues long: Protein translocase subunit SecA (1405 aa).

The interval 1 to 1099 (MHMKIKKFKK…SDYKKLNEDE (1099 aa)) is protein translocase subunit SecA. ATP contacts are provided by residues Gln88, 106 to 110 (GEGKS), and Asp494. A unknown region spans residues 1100–1405 (SDDDIKAFYK…LDYLKENNKK (306 aa)).

This sequence belongs to the SecA family. In terms of assembly, monomer and homodimer. Part of the essential Sec protein translocation apparatus which comprises SecA, SecYEG and auxiliary proteins SecDF. Other proteins may also be involved.

The protein resides in the cell membrane. Its subcellular location is the cytoplasm. The catalysed reaction is ATP + H2O + cellular proteinSide 1 = ADP + phosphate + cellular proteinSide 2.. In terms of biological role, part of the Sec protein translocase complex. Interacts with the SecYEG preprotein conducting channel. Has a central role in coupling the hydrolysis of ATP to the transfer of proteins into and across the cell membrane, serving as an ATP-driven molecular motor driving the stepwise translocation of polypeptide chains across the membrane. In Malacoplasma penetrans (strain HF-2) (Mycoplasma penetrans), this protein is Protein translocase subunit SecA.